The following is a 205-amino-acid chain: Large ribosomal subunit protein uL4 (205 aa).

The segment at 65-99 (RQKGTGGARHGSRKSPTFRHGGVYKGPTPRSHGHD) is disordered.

The protein belongs to the universal ribosomal protein uL4 family. Part of the 50S ribosomal subunit.

One of the primary rRNA binding proteins, this protein initially binds near the 5'-end of the 23S rRNA. It is important during the early stages of 50S assembly. It makes multiple contacts with different domains of the 23S rRNA in the assembled 50S subunit and ribosome. Its function is as follows. Forms part of the polypeptide exit tunnel. This is Large ribosomal subunit protein uL4 from Ruegeria pomeroyi (strain ATCC 700808 / DSM 15171 / DSS-3) (Silicibacter pomeroyi).